We begin with the raw amino-acid sequence, 152 residues long: Eukaryotic translation initiation factor 2 subunit 3 (152 aa).

Residue A1 is modified to N-acetylalanine. A GTP-binding site is contributed by 51–54 (NKID).

It belongs to the TRAFAC class translation factor GTPase superfamily. Classic translation factor GTPase family. EIF2G subfamily. Eukaryotic translation initiation factor 2 eIF2 is a heterotrimeric complex composed of an alpha (EIF2S1), a beta (EIF2S2) and a gamma (EIF2S3) chain. eIF2 is member of the 43S pre-initiation complex (43S PIC). Interacts (via C-terminus) with CDC123; the interaction is direct.

It localises to the cytoplasm. The protein localises to the cytosol. Member of the eIF2 complex that functions in the early steps of protein synthesis by forming a ternary complex with GTP and initiator tRNA. This complex binds to a 40S ribosomal subunit, followed by mRNA binding to form the 43S pre-initiation complex (43S PIC). Junction of the 60S ribosomal subunit to form the 80S initiation complex is preceded by hydrolysis of the GTP bound to eIF2 and release of an eIF2-GDP binary complex. In order for eIF2 to recycle and catalyze another round of initiation, the GDP bound to eIF2 must exchange with GTP by way of a reaction catalyzed by eIF-2B. The protein is Eukaryotic translation initiation factor 2 subunit 3 (EIF2S3) of Oryctolagus cuniculus (Rabbit).